A 211-amino-acid chain; its full sequence is Holliday junction branch migration complex subunit RuvA (211 aa).

Positions 1–63 (MIASLRGTVI…EDSQTLYVFK (63 aa)) are domain I. Positions 64–142 (DADEKRAFAT…DLGEIADTGA (79 aa)) are domain II. The flexible linker stretch occupies residues 143–157 (VGAAGAVGDGGDGQA). The tract at residues 158–211 (VAPDVREQVLEALVGLGFTESKAGTTIEAVLSQWSAPQAPDASGLLRASLAAIK) is domain III.

It belongs to the RuvA family. As to quaternary structure, homotetramer. Forms an RuvA(8)-RuvB(12)-Holliday junction (HJ) complex. HJ DNA is sandwiched between 2 RuvA tetramers; dsDNA enters through RuvA and exits via RuvB. An RuvB hexamer assembles on each DNA strand where it exits the tetramer. Each RuvB hexamer is contacted by two RuvA subunits (via domain III) on 2 adjacent RuvB subunits; this complex drives branch migration. In the full resolvosome a probable DNA-RuvA(4)-RuvB(12)-RuvC(2) complex forms which resolves the HJ.

The protein resides in the cytoplasm. In terms of biological role, the RuvA-RuvB-RuvC complex processes Holliday junction (HJ) DNA during genetic recombination and DNA repair, while the RuvA-RuvB complex plays an important role in the rescue of blocked DNA replication forks via replication fork reversal (RFR). RuvA specifically binds to HJ cruciform DNA, conferring on it an open structure. The RuvB hexamer acts as an ATP-dependent pump, pulling dsDNA into and through the RuvAB complex. HJ branch migration allows RuvC to scan DNA until it finds its consensus sequence, where it cleaves and resolves the cruciform DNA. This Corynebacterium jeikeium (strain K411) protein is Holliday junction branch migration complex subunit RuvA.